The chain runs to 260 residues: Putative ABC transporter ATP-binding protein PH0132 (260 aa).

The ABC transporter domain occupies 2-234 (IEFRDVWFWY…DLEGFGLKEP (233 aa)). 34-41 (GPNGSGKT) is a binding site for ATP.

This sequence belongs to the ABC transporter superfamily.

Its subcellular location is the cell membrane. Its function is as follows. Probably part of an ABC transporter complex. Responsible for energy coupling to the transport system. This chain is Putative ABC transporter ATP-binding protein PH0132, found in Pyrococcus horikoshii (strain ATCC 700860 / DSM 12428 / JCM 9974 / NBRC 100139 / OT-3).